The sequence spans 314 residues: Epithelial-stromal interaction protein 1 (314 aa).

Disordered regions lie at residues Met1 to Thr72, Asn200 to Pro219, Pro225 to Glu267, and Ser292 to Ile314. Basic and acidic residues predominate over residues Ala43 to Gln58. A coiled-coil region spans residues Glu71 to Arg180. The segment covering Ala232–Glu267 has biased composition (basic and acidic residues). The span at Asn305 to Ile314 shows a compositional bias: polar residues.

Its function is as follows. Plays a role in M1 macrophage polarization and is required for the proper regulation of gene expression during M1 versus M2 macrophage differentiation. Might play a role in RELA/p65 and STAT1 phosphorylation and nuclear localization upon activation of macrophages. In Rattus norvegicus (Rat), this protein is Epithelial-stromal interaction protein 1 (Epsti1).